The sequence spans 59 residues: U-reduvitoxin-Pr6a (59 aa).

A signal peptide spans Met1–Gly19. Disulfide bonds link Cys31–Cys46, Cys38–Cys51, and Cys45–Cys58.

The protein belongs to the venom Ptu1-like knottin family. As to expression, expressed by the venom gland.

It is found in the secreted. In terms of biological role, binds reversibly and blocks P/Q-type voltage-gated calcium channels (Cav). The protein is U-reduvitoxin-Pr6a of Platymeris rhadamanthus (Red spot assassin bug).